Reading from the N-terminus, the 355-residue chain is Anthranilate phosphoribosyltransferase (355 aa).

5-phospho-alpha-D-ribose 1-diphosphate contacts are provided by residues G99, 102-103 (GD), T107, 109-112 (NIST), 127-135 (KHGNRSVSS), and S139. G99 serves as a coordination point for anthranilate. Position 111 (S111) interacts with Mg(2+). Position 130 (N130) interacts with anthranilate. Residue R185 participates in anthranilate binding. The Mg(2+) site is built by D243 and E244.

This sequence belongs to the anthranilate phosphoribosyltransferase family. In terms of assembly, homodimer. Mg(2+) serves as cofactor.

It carries out the reaction N-(5-phospho-beta-D-ribosyl)anthranilate + diphosphate = 5-phospho-alpha-D-ribose 1-diphosphate + anthranilate. Its pathway is amino-acid biosynthesis; L-tryptophan biosynthesis; L-tryptophan from chorismate: step 2/5. Functionally, catalyzes the transfer of the phosphoribosyl group of 5-phosphorylribose-1-pyrophosphate (PRPP) to anthranilate to yield N-(5'-phosphoribosyl)-anthranilate (PRA). This Pseudoalteromonas translucida (strain TAC 125) protein is Anthranilate phosphoribosyltransferase.